We begin with the raw amino-acid sequence, 123 residues long: Sirohydrochlorin cobaltochelatase (123 aa).

The active-site Proton acceptor is His-9. His-9 is a binding site for Co(2+). Substrate is bound by residues Glu-43 and Phe-68–His-73. His-73 contributes to the Co(2+) binding site.

It belongs to the CbiX family. CbiXS subfamily. In terms of assembly, homotetramer; dimer of dimers.

The enzyme catalyses Co-sirohydrochlorin + 2 H(+) = sirohydrochlorin + Co(2+). It participates in cofactor biosynthesis; adenosylcobalamin biosynthesis; cob(II)yrinate a,c-diamide from sirohydrochlorin (anaerobic route): step 1/10. Functionally, catalyzes the insertion of Co(2+) into sirohydrochlorin as part of the anaerobic pathway to cobalamin biosynthesis. The polypeptide is Sirohydrochlorin cobaltochelatase (Sulfolobus acidocaldarius (strain ATCC 33909 / DSM 639 / JCM 8929 / NBRC 15157 / NCIMB 11770)).